A 67-amino-acid polypeptide reads, in one-letter code: Large ribosomal subunit protein uL29 (67 aa).

The protein belongs to the universal ribosomal protein uL29 family.

In Polaromonas naphthalenivorans (strain CJ2), this protein is Large ribosomal subunit protein uL29.